Reading from the N-terminus, the 70-residue chain is Guanine nucleotide-binding protein G(I)/G(S)/G(O) subunit gamma-8 (70 aa).

A Cysteine methyl ester modification is found at Cys67. Cys67 is lipidated: S-geranylgeranyl cysteine. The propeptide at 68-70 (VLL) is removed in mature form.

It belongs to the G protein gamma family. As to quaternary structure, g proteins are composed of 3 units, alpha, beta and gamma.

The protein localises to the cell membrane. Guanine nucleotide-binding proteins (G proteins) are involved as a modulator or transducer in various transmembrane signaling systems. The beta and gamma chains are required for the GTPase activity, for replacement of GDP by GTP, and for G protein-effector interaction. This Homo sapiens (Human) protein is Guanine nucleotide-binding protein G(I)/G(S)/G(O) subunit gamma-8 (GNG8).